A 69-amino-acid chain; its full sequence is Large ribosomal subunit protein uL29 (69 aa).

This sequence belongs to the universal ribosomal protein uL29 family.

The sequence is that of Large ribosomal subunit protein uL29 from Rhodospirillum centenum (strain ATCC 51521 / SW).